The primary structure comprises 162 residues: Allophycocyanin beta chain (162 aa).

Residue asparagine 72 is modified to N4-methylasparagine. Cysteine 82 provides a ligand contact to (2R,3E)-phycocyanobilin.

Belongs to the phycobiliprotein family. In terms of assembly, heterodimer of an alpha and a beta chain. In terms of processing, contains one covalently linked phycocyanobilin chromophore.

Its subcellular location is the cellular thylakoid membrane. Functionally, light-harvesting photosynthetic bile pigment-protein from the phycobiliprotein complex. Allophycocyanin has a maximum absorption at approximately 650 nanometers. The sequence is that of Allophycocyanin beta chain from Microchaete diplosiphon (Fremyella diplosiphon).